The following is a 617-amino-acid chain: Urocanate reductase (617 aa).

Thr70 carries the FMN phosphoryl threonine modification. FAD contacts are provided by Ala124, Glu143, Asn151, Thr152, Gly156, Gly157, and Asp387. Residue Arg446 is the Proton donor of the active site. The FAD site is built by His553, Glu582, and Leu598.

It belongs to the FAD-dependent oxidoreductase 2 family. FRD/SDH subfamily. Requires FAD as cofactor. FMN is required as a cofactor.

It carries out the reaction dihydrourocanate + A = urocanate + AH2. Functionally, catalyzes the two-electron reduction of urocanate to dihydrourocanate (also named imidazole propionate or deamino-histidine). Dihydrourocanate is present at higher concentrations in subjects with type 2 diabetes, and directly impairs glucose tolerance and insulin signaling at the level of insulin receptor substrate (IRS) through activation of p38 gamma (MAPK12)-p62-mTORC1. Therefore, the UrdA enzyme from the gut bacteria L.fermentum strain NBRC 3956 may contribute to the pathogenesis of type 2 diabetes by producing the microbial metabolite dihydrourocanate. In Limosilactobacillus fermentum (strain NBRC 3956 / LMG 18251) (Lactobacillus fermentum), this protein is Urocanate reductase.